We begin with the raw amino-acid sequence, 1153 residues long: AP-3 complex subunit delta-1 (1153 aa).

Ala2 is modified (N-acetylalanine). HEAT repeat units lie at residues 34-71 (KYISQCIDEIKQELKQDNIAVKANAVCKLTYLQMLGYD), 77-114 (FNIIEVMSASKFTFKRIGYLAASQSFHEGTDVIMLTTN), 142-179 (DLARDLANDIMTLMSHTKPYIRKKAVLIMYKVFLKYPE), 180-216 (SLRPAFPRLKEKLEDPDPGVQSAAVNVICELARRNPK), 254-292 (RLGKKLIEPLTNLIHSTSAMSLLYECVNTVIAVLISLSS), 299-336 (ASIQLCVQKLRILIEDSDQNLKYLGLLAMSKILKTHPK), 338-373 (VQSHKDLILQCLDDKDESIRLRALDLLYGMVSKKNL), 375-409 (EIVKKLMTHVDKAEGTTYRDELLTKIIDICSQSNY), 431-468 (TRHGHLIAAQMLDVAIRVKAIRKFAVSQMSALLDSAHL), 497-535 (QEPHHTLEAMLRPRVTTLPGHIQAVYVQNVVKLYASILQ), and 548-585 (AVTQLMVDRLPQFVQSADLEVQERASCILQLVKHIQKL). Disordered stretches follow at residues 629–696 (EPLS…YQDT) and 726–920 (KLEE…PPES). A phosphoserine mark is found at Ser632, Ser634, Ser636, and Ser658. Positions 639–675 (ERPRAVFHEEEQRRPKHRPSEADEEELARRREARKQE) are enriched in basic and acidic residues. Positions 659-679 (EADEEELARRREARKQEQANN) form a coiled coil. Position 688 is a phosphoserine (Ser688). Residues 725 to 756 (VKLEEERRHRQKLEKDKRRKKRKEKEKKGKRR) adopt a coiled-coil conformation. Residues 726-740 (KLEEERRHRQKLEKD) are compositionally biased toward basic and acidic residues. A compositionally biased stretch (basic residues) spans 741-758 (KRRKKRKEKEKKGKRRHS). A phosphoserine mark is found at Ser758 and Ser759. The residue at position 762 (Thr762) is a Phosphothreonine. Phosphoserine is present on residues Ser764, Ala785, Ser788, Lys828, and Ser829. The segment covering 777 to 794 (VTEEMPENALPSDEDDKD) has biased composition (acidic residues). Residues 795–839 (PNDPYRALDIDLDKPLADSEKLPIQKHRNTETSKSPEKDVPMVEK) are compositionally biased toward basic and acidic residues. Composition is skewed to basic residues over residues 840–853 (KSKKPKKKEKKHKE) and 863–879 (EKEKKKSPKPKKKKHRK). A coiled-coil region spans residues 845-869 (KKKEKKHKEKERDKEKKKEKEKKKS). Val931 carries the phosphoserine modification.

Belongs to the adaptor complexes large subunit family. As to quaternary structure, AP-3 associates with the BLOC-1 complex. Adaptor protein complex 3 (AP-3) is a heterotetramer composed of two large adaptins (delta-type subunit AP3D1 and beta-type subunit AP3B1 or AP3B2), a medium adaptin (mu-type subunit AP3M1 or AP3M2) and a small adaptin (sigma-type subunit APS1 or AP3S2). Interacts with SLC30A2. Interacts with CLN3 (via dileucine motif); this interaction facilitates lysosomal targeting. In terms of tissue distribution, present in all adult tissues examined with the highest levels in skeletal muscle, heart, pancreas and testis.

It is found in the cytoplasm. The protein resides in the golgi apparatus membrane. Part of the AP-3 complex, an adaptor-related complex which is not clathrin-associated. The complex is associated with the Golgi region as well as more peripheral structures. It facilitates the budding of vesicles from the Golgi membrane and may be directly involved in trafficking to lysosomes. Involved in process of CD8+ T-cell and NK cell degranulation. In concert with the BLOC-1 complex, AP-3 is required to target cargos into vesicles assembled at cell bodies for delivery into neurites and nerve terminals. The polypeptide is AP-3 complex subunit delta-1 (AP3D1) (Homo sapiens (Human)).